The chain runs to 219 residues: Large ribosomal subunit protein uL16 (219 aa).

The protein belongs to the universal ribosomal protein uL16 family. Component of the small ribosomal subunit. Mature ribosomes consist of a small (40S) and a large (60S) subunit. The 40S subunit contains about 33 different proteins and 1 molecule of RNA (18S). The 60S subunit contains about 49 different proteins and 3 molecules of RNA (25S, 5.8S and 5S).

This is Large ribosomal subunit protein uL16 (RPL10) from Encephalitozoon cuniculi (strain GB-M1) (Microsporidian parasite).